The following is a 299-amino-acid chain: Protease HtpX homolog (299 aa).

Helical transmembrane passes span 15-35 (ILLLVFFLLLALVGYAVGYLF) and 39-59 (GLGGLVIALIIGFIYALSMIF). Residue His143 participates in Zn(2+) binding. Residue Glu144 is part of the active site. Position 147 (His147) interacts with Zn(2+). Helical transmembrane passes span 158–178 (IAVALASAITMLSSMAGRMMW) and 198–218 (IIMLVVSLLAIVLAPLAATLV). Position 227 (Glu227) interacts with Zn(2+).

This sequence belongs to the peptidase M48B family. Zn(2+) serves as cofactor.

The protein localises to the cell membrane. The polypeptide is Protease HtpX homolog (Streptococcus pneumoniae serotype 4 (strain ATCC BAA-334 / TIGR4)).